Reading from the N-terminus, the 533-residue chain is Beta-glucosidase 10 (533 aa).

Residues 1–23 (MAVAGAMVMSGGVLLLLLAFTCA) form the signal peptide. Glutamine 53 is a binding site for a beta-D-glucoside. An N-linked (GlcNAc...) asparagine glycan is attached at asparagine 122. Residues histidine 157 and 202–203 (NE) contribute to the a beta-D-glucoside site. Glutamate 203 serves as the catalytic Proton donor. Cysteine 222 and cysteine 230 are oxidised to a cystine. Residue tyrosine 369 coordinates a beta-D-glucoside. An N-linked (GlcNAc...) asparagine glycan is attached at asparagine 384. Glutamate 440 lines the a beta-D-glucoside pocket. Glutamate 440 functions as the Nucleophile in the catalytic mechanism. N-linked (GlcNAc...) asparagine glycosylation occurs at asparagine 448. Residues tryptophan 489, 496-497 (EW), and phenylalanine 505 each bind a beta-D-glucoside.

This sequence belongs to the glycosyl hydrolase 1 family.

It carries out the reaction Hydrolysis of terminal, non-reducing beta-D-glucosyl residues with release of beta-D-glucose.. This Oryza sativa subsp. japonica (Rice) protein is Beta-glucosidase 10 (BGLU10).